Consider the following 698-residue polypeptide: Zinc finger CCCH domain-containing protein 7 (698 aa).

Pro residues predominate over residues methionine 1–alanine 11. Disordered stretches follow at residues methionine 1 to threonine 23, histidine 56 to arginine 95, alanine 109 to threonine 137, and glycine 272 to serine 300. 2 stretches are compositionally biased toward low complexity: residues alanine 12 to proline 21 and glutamate 65 to proline 74. A compositionally biased stretch (acidic residues) spans glutamate 281 to serine 300. C3H1-type zinc fingers lie at residues proline 429–threonine 456, leucine 458–serine 485, and lysine 486–proline 511. Disordered regions lie at residues threonine 512 to alanine 553 and threonine 607 to valine 682. Composition is skewed to polar residues over residues cysteine 535–tyrosine 548 and serine 665–histidine 680.

This chain is Zinc finger CCCH domain-containing protein 7, found in Oryza sativa subsp. japonica (Rice).